The following is a 789-amino-acid chain: Transducer protein Htr6 (789 aa).

2 helical membrane passes run 29–49 (FAVA…FAFQ) and 294–314 (TVTV…IALG). 2 consecutive HAMP domains span residues 315-367 (RHTV…DRIQ) and 409-462 (ERLQ…ATIA). One can recognise a Methyl-accepting transducer domain in the interval 481-717 (GAEEIETTSQ…SVVRRVDDVA (237 aa)). The disordered stretch occupies residues 763–789 (NQFETRADADEPDADTTVDASADDTGD). A compositionally biased stretch (acidic residues) spans 772 to 789 (DEPDADTTVDASADDTGD).

The protein belongs to the methyl-accepting chemotaxis (MCP) protein family. Post-translationally, methylated by CheR.

The protein resides in the cell membrane. Potentially involved in chemo- or phototactic signal transduction. The polypeptide is Transducer protein Htr6 (htr6) (Halobacterium salinarum (strain ATCC 29341 / DSM 671 / R1)).